Reading from the N-terminus, the 289-residue chain is Serine/threonine-protein phosphatase Pgam5, mitochondrial (289 aa).

The helical transmembrane segment at 7–23 (FVCGTGAGLAAYYLQRL) threads the bilayer.

It belongs to the phosphoglycerate mutase family. BPG-dependent PGAM subfamily. Interacts with Pk92B/ASK1.

The protein localises to the mitochondrion outer membrane. It catalyses the reaction O-phospho-L-seryl-[protein] + H2O = L-seryl-[protein] + phosphate. The enzyme catalyses O-phospho-L-threonyl-[protein] + H2O = L-threonyl-[protein] + phosphate. Its function is as follows. Displays phosphatase activity for serine/threonine residues, and dephosphorylates and activates Pk92B kinase. Has apparently no phosphoglycerate mutase activity. The polypeptide is Serine/threonine-protein phosphatase Pgam5, mitochondrial (Pgam5) (Drosophila melanogaster (Fruit fly)).